Here is a 323-residue protein sequence, read N- to C-terminus: Trihelix transcription factor GT-3a (323 aa).

A compositionally biased stretch (basic residues) spans 1–20; sequence MDRRNPFQHHHHHHQLHHHL. The disordered stretch occupies residues 1 to 51; that stretch reads MDRRNPFQHHHHHHQLHHHLIQQQQLPPPPLSTTATMDPGGGGGGGERIPQ. One can recognise a Myb-like domain in the interval 52 to 108; the sequence is WSIEETKELLAIREELDQTFMETKRNKLLWEVVAAKMADKGFVRSAEQCKSKWKNLV. Disordered regions lie at residues 147–176, 190–220, and 269–297; these read EATE…EPNQ, KRET…GTKA, and ELEE…ARAQ. Residues 164-176 show a composition bias toward acidic residues; the sequence is SDDEEEEVDEPNQ.

As to quaternary structure, homodimer. Heterodimer with GT-3B. In terms of tissue distribution, predominantly expressed in roots and flower buds.

It localises to the nucleus. Probable transcription factor that binds specifically to the core DNA sequence 5'-GTTAC-3'. This Arabidopsis thaliana (Mouse-ear cress) protein is Trihelix transcription factor GT-3a (GT-3A).